We begin with the raw amino-acid sequence, 925 residues long: MDYSKTLALPKTEFPMRGNLPSREPQMQAVWEEQNIYQQVLDRTKDRPSFVLHDGPPYANGDIHIGHALNKILKDFIVRYKSMAGFYAPYIPGWDTHGLPIEQAIINAQGLDRRSIEVNDFRQRCEEYAWSYIDKQRDQFKRLGVRGDWENPYVTLLPEYEANQIRVFGEMAKKGYIYKGLRCVYWSPSSETALADAEIEYKDKRSPSIYVSFQVADGKGKLDIETGVVIWTTTPWTLPANLAISLHPELEYNVVKVDGRKFLVANGLIEAASKEIGWEGVEILATFKGQELEGVETQHPFYDRKSPLILGEHVTLDAGTGCVHTAPGHGEDDFNVGQKYNLGVLCPVDHEGKMTNEAPGFEGLFYEDANKVITEKLKENGALLKLSFFTHSYPHDWRTKKPVIYRATEQWFASIDGFRTQMLEAIKNVKWIPHWGETRLANMIADRGDWCISRQRVWGVPIPIFYCKACNEPIINDTTINHVADLFRKEGSKVWFSREANELVPEGLSCTKCDCNDFRKETDIMDVWFDSGSSHQAVLRERGIAWPADMYLEGSDQYRGWFNSSLSTGVAVYGTAPYKSVLSHGFALDGEGRKMSKSLGNVIVPQQVIDKMGADILRLWVASVDYQADVRISDAILNQIAEVYRKIRNTFRFLLGNLDGFNPATDRVAYEELGELDRYVLAKAAKVAKRTRKAYDEYQFHTVFHAVHNFCVIDLSAFYLDICKDRLYVEAPDSLKRRAAQTVMYDCLLSLVKLVAPLLPHTADEVWAFIPGVEEKSVQLTDMPEGDEQHLSFAAEAESKWDAFLAIRDEVLKAMEEARRNKVFGNSVDAKLALYPQTEEVAKTLAAMDDLADLFIVAHVDVHSGSAPAEAVQLEGIAAVVSAADGGKCERCRVVKPDVGTRESHASLCVRCADVVEQHYAHVTE.

Positions 57 to 67 (PYANGDIHIGH) match the 'HIGH' region motif. Glu553 is an L-isoleucyl-5'-AMP binding site. A 'KMSKS' region motif is present at residues 594-598 (KMSKS). Residue Lys597 participates in ATP binding. Positions 889, 892, 909, and 912 each coordinate Zn(2+).

This sequence belongs to the class-I aminoacyl-tRNA synthetase family. IleS type 1 subfamily. As to quaternary structure, monomer. It depends on Zn(2+) as a cofactor.

Its subcellular location is the cytoplasm. It carries out the reaction tRNA(Ile) + L-isoleucine + ATP = L-isoleucyl-tRNA(Ile) + AMP + diphosphate. Its function is as follows. Catalyzes the attachment of isoleucine to tRNA(Ile). As IleRS can inadvertently accommodate and process structurally similar amino acids such as valine, to avoid such errors it has two additional distinct tRNA(Ile)-dependent editing activities. One activity is designated as 'pretransfer' editing and involves the hydrolysis of activated Val-AMP. The other activity is designated 'posttransfer' editing and involves deacylation of mischarged Val-tRNA(Ile). In Brevibacillus brevis (strain 47 / JCM 6285 / NBRC 100599), this protein is Isoleucine--tRNA ligase.